The primary structure comprises 497 residues: Guanosine-5'-triphosphate,3'-diphosphate pyrophosphatase (497 aa).

This sequence belongs to the GppA/Ppx family. GppA subfamily.

The catalysed reaction is guanosine 3'-diphosphate 5'-triphosphate + H2O = guanosine 3',5'-bis(diphosphate) + phosphate + H(+). It functions in the pathway purine metabolism; ppGpp biosynthesis; ppGpp from GTP: step 2/2. Functionally, catalyzes the conversion of pppGpp to ppGpp. Guanosine pentaphosphate (pppGpp) is a cytoplasmic signaling molecule which together with ppGpp controls the 'stringent response', an adaptive process that allows bacteria to respond to amino acid starvation, resulting in the coordinated regulation of numerous cellular activities. The chain is Guanosine-5'-triphosphate,3'-diphosphate pyrophosphatase from Vibrio campbellii (strain ATCC BAA-1116).